The sequence spans 407 residues: uncharacterized protein (407 aa).

The next 12 helical transmembrane spans lie at 22–42, 51–71, 101–121, 126–146, 154–174, 179–199, 227–247, 258–278, 286–306, 309–329, 347–367, and 369–389; these read IVSV…PLAV, LGFS…ATLA, ALLL…VLLV, VLGI…IGRV, VISW…PVGV, ALIP…GYYL, GLGL…ITLY, LSLT…ANTI, VAIV…LAPV, VALV…PALG, AYSV…GYVA, and AFGY…GVAL.

Belongs to the major facilitator superfamily. YhhS family.

It localises to the cell inner membrane. This is an uncharacterized protein from Burkholderia pseudomallei (strain 1106a).